The following is a 370-amino-acid chain: 3-isopropylmalate dehydrogenase (370 aa).

77–90 provides a ligand contact to NAD(+); that stretch reads GPKWDSVPYEVRPE. R97, R107, R135, and D226 together coordinate substrate. Residues D226, D250, and D254 each contribute to the Mg(2+) site. Position 290 to 302 (290 to 302) interacts with NAD(+); the sequence is GSAPDIAGKGIAN.

It belongs to the isocitrate and isopropylmalate dehydrogenases family. LeuB type 1 subfamily. Homodimer. Requires Mg(2+) as cofactor. Mn(2+) serves as cofactor.

The protein localises to the cytoplasm. The enzyme catalyses (2R,3S)-3-isopropylmalate + NAD(+) = 4-methyl-2-oxopentanoate + CO2 + NADH. The protein operates within amino-acid biosynthesis; L-leucine biosynthesis; L-leucine from 3-methyl-2-oxobutanoate: step 3/4. Catalyzes the oxidation of 3-carboxy-2-hydroxy-4-methylpentanoate (3-isopropylmalate) to 3-carboxy-4-methyl-2-oxopentanoate. The product decarboxylates to 4-methyl-2 oxopentanoate. The polypeptide is 3-isopropylmalate dehydrogenase (Brucella suis biovar 1 (strain 1330)).